We begin with the raw amino-acid sequence, 426 residues long: MLTIKDIHALEVMDSRGNPTIQASVILSDNTKASAIVPSGASTGKREALELRDNDKTRFLGKGVLRACENVNSVIKHHLIGLEATNQAFVDERLRALDGTPNYANLGANAVLGVSMALARASAKALNLPLYRYLGGANALTLPVPMLNIINGGTHANNSIDFQEYMIMPLGFESFKEALRASAEVYHTLKKLLDEKNQLTSVGDEGGFAPNFNNNVEPLEIISQAIEKAGYKLGEEIALALDVASSELVDEHFNYHLKGENKILDSHELVAYYKELVAKYPIVSIEDGLSEDDWEGWAFLSKELGRQIQLVGDDLFVTNASILQKGIEKNVANAILIKPNQIGTISETLETIRLAKHHAYQCVISHRSGESEDSFIADFAVALNTGEIKTGSTARSERIAKYNRLLEIEHELKGGIYIGKELFKHG.

Residue Gln163 coordinates (2R)-2-phosphoglycerate. Glu205 serves as the catalytic Proton donor. The Mg(2+) site is built by Asp242, Glu286, and Asp313. (2R)-2-phosphoglycerate is bound by residues Lys338, Arg367, Ser368, and Lys389. Lys338 (proton acceptor) is an active-site residue.

It belongs to the enolase family. Mg(2+) serves as cofactor.

The protein localises to the cytoplasm. The protein resides in the secreted. It localises to the cell surface. The catalysed reaction is (2R)-2-phosphoglycerate = phosphoenolpyruvate + H2O. It functions in the pathway carbohydrate degradation; glycolysis; pyruvate from D-glyceraldehyde 3-phosphate: step 4/5. In terms of biological role, catalyzes the reversible conversion of 2-phosphoglycerate (2-PG) into phosphoenolpyruvate (PEP). It is essential for the degradation of carbohydrates via glycolysis. This chain is Enolase, found in Helicobacter pylori (strain J99 / ATCC 700824) (Campylobacter pylori J99).